A 578-amino-acid chain; its full sequence is Zinc finger-containing ubiquitin peptidase 1 (578 aa).

The C2H2-type 1 zinc-finger motif lies at 2-24; it reads LSCDICGETVTSEPDMKAHLIVH. Residues 29–52 form a C2H2-type 2; atypical zinc finger; it reads IVCPFCKLSGVSYDEMCFHIETAH. 2 consecutive C2H2-type zinc fingers follow at residues 154 to 177 and 193 to 215; these read PECP…KTTH and YDCP…VDLH. The interval 226–248 is MIU; that stretch reads DRVQCSGDLQLAHQLQQEEDRKR. Residues 249 to 274 form a zUBD/ZHA region; sequence RSEESRQEIEEFQKLQRQYGLDNSGG. At K262 the chain carries N6-acetyllysine. The active-site Nucleophile is the C360. H491 acts as the Proton acceptor in catalysis. D512 is an active-site residue.

Belongs to the peptidase C78 family. ZUFSP subfamily. Interacts with RPA1 and RPA2.

It is found in the cytoplasm. The protein localises to the nucleus. It catalyses the reaction Thiol-dependent hydrolysis of ester, thioester, amide, peptide and isopeptide bonds formed by the C-terminal Gly of ubiquitin (a 76-residue protein attached to proteins as an intracellular targeting signal).. In terms of biological role, deubiquitinase with endodeubiquitinase activity that specifically interacts with and cleaves 'Lys-63'-linked long polyubiquitin chains. Shows only weak activity against 'Lys-11' and 'Lys-48'-linked chains. Plays an important role in genome stability pathways, functioning to prevent spontaneous DNA damage and also promote cellular survival in response to exogenous DNA damage. Modulates the ubiquitination status of replication protein A (RPA) complex proteins in response to replication stress. This Macaca fascicularis (Crab-eating macaque) protein is Zinc finger-containing ubiquitin peptidase 1.